The following is a 2194-amino-acid chain: PDZ and LIM domain protein Zasp (2194 aa).

The PDZ domain maps to Q8 to G90. The interval T211–T277 is disordered. A compositionally biased stretch (low complexity) spans P228–Q253. The LIM zinc-binding 1 domain maps to N280–N339. Residues A415 to D435 show a composition bias toward low complexity. Disordered stretches follow at residues A415–N436, V457–F476, G511–E558, S580–P611, V623–E692, A896–S940, L1223–Q1260, Q1297–N1322, L1550–E1632, Q1646–T1738, and A1815–Q1837. A compositionally biased stretch (low complexity) spans P515–P530. 2 stretches are compositionally biased toward polar residues: residues S580–T590 and V644–A667. Positions S676–E692 are enriched in low complexity. A compositionally biased stretch (polar residues) spans Q1598–G1610. Low complexity-rich tracts occupy residues S1616–Q1630, Q1646–Q1668, and S1699–S1727. LIM zinc-binding domains are found at residues P2018–A2078, P2079–T2138, and K2139–R2194.

In terms of assembly, interacts with alpha-actinin (Actn). As to expression, expression is first detected in the proctodeum and the midgut primordium. In stage 11 embryos, expression is predominant in the leading edge of epidermal cells adjacent to the amnioserosa. Stage 12 embryos exhibit expression in the midgut and the leading edge. Expressed in several rows of germ band cells next to the leading edge at stage 14. Strong expression is visible in the midgut and pharyngeal muscles of stage 17 embryos. Also expressed in somatic muscles and visceral mesoderm. Colocalizes with mys (beta PS integrin) in myotendinous junctions and with Actn in muscle Z lines.

Its subcellular location is the cytoplasm. The protein localises to the cytoskeleton. In terms of biological role, regulator of cell matrix adhesion having two related functions, one upstream of Actn organizing the Z line and the other downstream of integrins regulating assembly of integrin adhesion sites. Also required for the formation of myotendinous junctions in muscles. In Drosophila melanogaster (Fruit fly), this protein is PDZ and LIM domain protein Zasp (Zasp52).